The primary structure comprises 366 residues: 3-isopropylmalate dehydrogenase (366 aa).

Glycine 78–glutamate 91 is an NAD(+) binding site. Arginine 99, arginine 109, arginine 138, and aspartate 227 together coordinate substrate. Positions 227, 251, and 255 each coordinate Mg(2+). Residue glycine 285–asparagine 297 coordinates NAD(+).

It belongs to the isocitrate and isopropylmalate dehydrogenases family. LeuB type 1 subfamily. As to quaternary structure, homodimer. Mg(2+) is required as a cofactor. The cofactor is Mn(2+).

Its subcellular location is the cytoplasm. The enzyme catalyses (2R,3S)-3-isopropylmalate + NAD(+) = 4-methyl-2-oxopentanoate + CO2 + NADH. The protein operates within amino-acid biosynthesis; L-leucine biosynthesis; L-leucine from 3-methyl-2-oxobutanoate: step 3/4. In terms of biological role, catalyzes the oxidation of 3-carboxy-2-hydroxy-4-methylpentanoate (3-isopropylmalate) to 3-carboxy-4-methyl-2-oxopentanoate. The product decarboxylates to 4-methyl-2 oxopentanoate. The protein is 3-isopropylmalate dehydrogenase of Blochmanniella pennsylvanica (strain BPEN).